The following is an 880-amino-acid chain: Dynamin-like protein A (880 aa).

Positions 1-124 (MSVFKKKDKS…QVELERKRRD (124 aa)) are disordered. Over residues 8–20 (DKSDDKKKKHDEE) the composition is skewed to basic and acidic residues. A compositionally biased stretch (polar residues) spans 22–31 (PQGTFQPASQ). Low complexity predominate over residues 32–68 (STSNTNLNSLASSVNNGASVGSTNGSTPNNSNGSTPT). The stretch at 69-152 (YNHNNSAEEL…NEQVEISSLE (84 aa)) forms a coiled coil. Basic and acidic residues-rich tracts occupy residues 77-94 (ELEK…KSEL) and 103-124 (KKKE…KRRD). In terms of domain architecture, Dynamin-type G spans 191–478 (AVSHPEIVFV…VWKSYQDTIP (288 aa)). The interval 201–208 (GPRSSGKS) is G1 motif. 201 to 208 (GPRSSGKS) is a binding site for GTP. The segment at 227 to 240 (IVGVGGSNANGCSK) is G2 motif. Residues 315–318 (DSPG) are G3 motif. Residues 315-319 (DSPGL) and 380-383 (TKFH) contribute to the GTP site. A G4 motif region spans residues 380-383 (TKFH). The tract at residues 413 to 416 (LPNH) is G5 motif. Residues 479–509 (RILKHLRSKRQTAEATLNELQKQSSSLDSTK) are a coiled coil. Residues 532–543 (TSEGNPSANGQT) are compositionally biased toward polar residues. The segment at 532 to 551 (TSEGNPSANGQTLDEEKSQQ) is disordered. Residues 824–861 (SNEQLEQLFEVQATREQLKQEEKKQQQILEKYSQIDEQ) adopt a coiled-coil conformation.

It belongs to the TRAFAC class dynamin-like GTPase superfamily. Dynamin/Fzo/YdjA family.

Its subcellular location is the cytoplasm. It localises to the cleavage furrow. It carries out the reaction GTP + H2O = GDP + phosphate + H(+). In terms of biological role, involved in cytokinesis. May hydrolyze GTP. This is Dynamin-like protein A (dlpA) from Dictyostelium discoideum (Social amoeba).